A 331-amino-acid chain; its full sequence is Uroporphyrinogen decarboxylase (331 aa).

Residues 22-26 (RQAGR), Asp71, Tyr145, Ser199, and His308 contribute to the substrate site.

The protein belongs to the uroporphyrinogen decarboxylase family. In terms of assembly, homodimer.

It localises to the cytoplasm. It catalyses the reaction uroporphyrinogen III + 4 H(+) = coproporphyrinogen III + 4 CO2. Its pathway is porphyrin-containing compound metabolism; protoporphyrin-IX biosynthesis; coproporphyrinogen-III from 5-aminolevulinate: step 4/4. Its function is as follows. Catalyzes the decarboxylation of four acetate groups of uroporphyrinogen-III to yield coproporphyrinogen-III. The sequence is that of Uroporphyrinogen decarboxylase from Picrophilus torridus (strain ATCC 700027 / DSM 9790 / JCM 10055 / NBRC 100828 / KAW 2/3).